Consider the following 245-residue polypeptide: PF03932 family protein CutC (245 aa).

It belongs to the CutC family.

It localises to the cytoplasm. The sequence is that of PF03932 family protein CutC from Caulobacter vibrioides (strain ATCC 19089 / CIP 103742 / CB 15) (Caulobacter crescentus).